Consider the following 181-residue polypeptide: Endoribonuclease YbeY (181 aa).

Zn(2+) contacts are provided by H115, H119, and H125.

It belongs to the endoribonuclease YbeY family. Zn(2+) serves as cofactor.

It localises to the cytoplasm. Single strand-specific metallo-endoribonuclease involved in late-stage 70S ribosome quality control and in maturation of the 3' terminus of the 16S rRNA. The polypeptide is Endoribonuclease YbeY (Bifidobacterium adolescentis (strain ATCC 15703 / DSM 20083 / NCTC 11814 / E194a)).